The sequence spans 247 residues: MNITPCSIKTLKGLYDISGVEVGQHFYWQIGGFQIHAQVLITSWFVITILLGSVIIAVRNPQTIPTDGQNFFEYVLEFIRDLSKTQIGEEYGPWVPFIGTMFLFIFVSNWSGALLPWKIIELPHGELAAPTNDINTTVALALLTSAAYFYAGLSKKGLSYFEKYIKPTPILLPINILEDFTKPLSLSFRLFGNILADELVVVVLVSLVPLVVPIPVMFLGLFTSGIQALIFATLAAAYIGESMEGHH.

5 helical membrane-spanning segments follow: residues 38–58, 95–115, 134–154, 199–219, and 220–240; these read QVLI…IIAV, VPFI…GALL, INTT…AGLS, LVVV…VMFL, and GLFT…AYIG.

This sequence belongs to the ATPase A chain family. F-type ATPases have 2 components, CF(1) - the catalytic core - and CF(0) - the membrane proton channel. CF(1) has five subunits: alpha(3), beta(3), gamma(1), delta(1), epsilon(1). CF(0) has four main subunits: a, b, b' and c.

Its subcellular location is the plastid. The protein resides in the chloroplast thylakoid membrane. Its function is as follows. Key component of the proton channel; it plays a direct role in the translocation of protons across the membrane. The chain is ATP synthase subunit a, chloroplastic from Sorghum bicolor (Sorghum).